Reading from the N-terminus, the 176-residue chain is 3-hydroxydecanoyl-[acyl-carrier-protein] dehydratase (176 aa).

H75 is an active-site residue.

Belongs to the thioester dehydratase family. FabA subfamily. Homodimer.

It localises to the cytoplasm. It catalyses the reaction a (3R)-hydroxyacyl-[ACP] = a (2E)-enoyl-[ACP] + H2O. The catalysed reaction is (3R)-hydroxydecanoyl-[ACP] = (2E)-decenoyl-[ACP] + H2O. It carries out the reaction (2E)-decenoyl-[ACP] = (3Z)-decenoyl-[ACP]. It functions in the pathway lipid metabolism; fatty acid biosynthesis. Functionally, necessary for the introduction of cis unsaturation into fatty acids. Catalyzes the dehydration of (3R)-3-hydroxydecanoyl-ACP to E-(2)-decenoyl-ACP and then its isomerization to Z-(3)-decenoyl-ACP. Can catalyze the dehydratase reaction for beta-hydroxyacyl-ACPs with saturated chain lengths up to 16:0, being most active on intermediate chain length. The polypeptide is 3-hydroxydecanoyl-[acyl-carrier-protein] dehydratase (Haemophilus ducreyi (strain 35000HP / ATCC 700724)).